A 456-amino-acid polypeptide reads, in one-letter code: Tyrosinase-like protein (456 aa).

The N-terminal stretch at 1-22 (MNTMTLLGKVFLLQFLIGVGFC) is a signal peptide. Cu cation-binding residues include His-145, His-154, His-163, His-295, His-299, and His-322.

This sequence belongs to the tyrosinase family. Cu(2+) serves as cofactor. In terms of tissue distribution, prismatic layer of shell (at protein level).

It localises to the secreted. The protein is Tyrosinase-like protein of Pinctada maxima (Silver-lipped pearl oyster).